Reading from the N-terminus, the 339-residue chain is MO25-like protein 3 (339 aa).

This sequence belongs to the Mo25 family.

This chain is MO25-like protein 3 (mop-25.3), found in Caenorhabditis elegans.